A 131-amino-acid chain; its full sequence is Small ribosomal subunit protein uS11 (131 aa).

It belongs to the universal ribosomal protein uS11 family. In terms of assembly, part of the 30S ribosomal subunit. Interacts with proteins S7 and S18. Binds to IF-3.

In terms of biological role, located on the platform of the 30S subunit, it bridges several disparate RNA helices of the 16S rRNA. Forms part of the Shine-Dalgarno cleft in the 70S ribosome. In Geobacter metallireducens (strain ATCC 53774 / DSM 7210 / GS-15), this protein is Small ribosomal subunit protein uS11.